Reading from the N-terminus, the 208-residue chain is FMRFamide-like neuropeptide 18 (208 aa).

Residues 1-21 (MQRWSGVLLISLCCLLRGALA) form the signal peptide. The propeptide occupies 22–83 (YTEPIYEIVE…VWEKRESSVQ (62 aa)). Phenylalanine 93 bears the Phenylalanine amide mark. A propeptide spanning residues 97–101 (AYFDE) is cleaved from the precursor. A Phenylalanine amide modification is found at phenylalanine 111. The propeptide occupies 115-119 (SYFDE). Residue phenylalanine 129 is modified to Phenylalanine amide. Positions 133 to 137 (DVPMD) are excised as a propeptide. Phenylalanine 147 carries the phenylalanine amide modification. Residues 151–158 (DYMADSFD) constitute a propeptide that is removed on maturation. A phenylalanine amide mark is found at phenylalanine 169 and phenylalanine 180. A propeptide spanning residues 184-195 (SDLEEHYAGVLL) is cleaved from the precursor. At phenylalanine 205 the chain carries Phenylalanine amide.

It belongs to the FARP (FMRFamide related peptide) family. Post-translationally, may be processed by convertase egl-3. Expressed in head neurons and weakly in ventral nerve cord. Expressed in the interneurons AVA, AIY and RIG, the motor neuron RIM and the pharyngeal neurons M2 and M3. EMPGVLRF-amide: Expressed in cholinergic pharyngeal motoneurons M2 and M3.

It localises to the secreted. FMRFamide-like neuropeptides. Ligand to G-protein coupled receptor npr-1. Involved in modulating locomotion quiescence during the sleep-like state called lethargus which occurs during molting between larval and adult stages, acting via npr-1. Together with flp-1, plays a homeostatic role by acting on the GABAergic neural transmission at neuromuscular junctions to prevent overexcitation of the locomotor circuit. Plays a role in the navigational capacity of sperm and the targeting of sperm derived from males to the fertilization site in the uterus of hermaphrodites. Functionally, SVPGVLRF-amide: Excites muscle tension. Its function is as follows. Activates the G-protein coupled receptor npr-1 more effectively than other flp-18 peptides. Inhibits the activity of dissected pharyngeal myogenic muscle system. The protein is FMRFamide-like neuropeptide 18 of Caenorhabditis elegans.